The sequence spans 68 residues: Large ribosomal subunit protein uL29 (68 aa).

Belongs to the universal ribosomal protein uL29 family.

This is Large ribosomal subunit protein uL29 from Prochlorococcus marinus (strain SARG / CCMP1375 / SS120).